The primary structure comprises 330 residues: 4-hydroxythreonine-4-phosphate dehydrogenase (330 aa).

Substrate is bound by residues histidine 136 and threonine 137. Residues histidine 166, histidine 211, and histidine 266 each contribute to the a divalent metal cation site. 3 residues coordinate substrate: lysine 274, asparagine 283, and arginine 292.

The protein belongs to the PdxA family. Homodimer. The cofactor is Zn(2+). Requires Mg(2+) as cofactor. Co(2+) is required as a cofactor.

The protein localises to the cytoplasm. It carries out the reaction 4-(phosphooxy)-L-threonine + NAD(+) = 3-amino-2-oxopropyl phosphate + CO2 + NADH. The protein operates within cofactor biosynthesis; pyridoxine 5'-phosphate biosynthesis; pyridoxine 5'-phosphate from D-erythrose 4-phosphate: step 4/5. Catalyzes the NAD(P)-dependent oxidation of 4-(phosphooxy)-L-threonine (HTP) into 2-amino-3-oxo-4-(phosphooxy)butyric acid which spontaneously decarboxylates to form 3-amino-2-oxopropyl phosphate (AHAP). This chain is 4-hydroxythreonine-4-phosphate dehydrogenase, found in Serratia proteamaculans (strain 568).